We begin with the raw amino-acid sequence, 370 residues long: Protein RKD5 (370 aa).

The disordered stretch occupies residues 193 to 232 (DSETESEESVNEKTEHSEFENDKTEQSESDAKTEILKKKK). Residues 202–228 (VNEKTEHSEFENDKTEQSESDAKTEIL) show a composition bias toward basic and acidic residues. One can recognise an RWP-RK domain in the interval 224-309 (KTEILKKKKR…AEKQQEKNEA (86 aa)). Residues 283-328 (HRKIKSLDCLIHDLQREAEKQQEKNEAAAMAVAKKQEKLETEKRNI) are a coiled coil. The segment at 347 to 370 (NFKKRHRASRAKKNQESLVTSSST) is disordered. Residues 349 to 358 (KKRHRASRAK) are compositionally biased toward basic residues.

It is found in the nucleus. Functionally, putative transcription factor. The sequence is that of Protein RKD5 (RKD5) from Arabidopsis thaliana (Mouse-ear cress).